We begin with the raw amino-acid sequence, 192 residues long: 3-isopropylmalate dehydratase small subunit (192 aa).

The protein belongs to the LeuD family. LeuD type 1 subfamily. Heterodimer of LeuC and LeuD.

It carries out the reaction (2R,3S)-3-isopropylmalate = (2S)-2-isopropylmalate. It functions in the pathway amino-acid biosynthesis; L-leucine biosynthesis; L-leucine from 3-methyl-2-oxobutanoate: step 2/4. In terms of biological role, catalyzes the isomerization between 2-isopropylmalate and 3-isopropylmalate, via the formation of 2-isopropylmaleate. The protein is 3-isopropylmalate dehydratase small subunit of Oceanobacillus iheyensis (strain DSM 14371 / CIP 107618 / JCM 11309 / KCTC 3954 / HTE831).